Here is a 341-residue protein sequence, read N- to C-terminus: Uroporphyrinogen decarboxylase (341 aa).

Residues 23–27 (RQAGR), Asp-73, Tyr-148, Ser-203, and His-318 each bind substrate.

It belongs to the uroporphyrinogen decarboxylase family. Homodimer.

The protein resides in the cytoplasm. The catalysed reaction is uroporphyrinogen III + 4 H(+) = coproporphyrinogen III + 4 CO2. Its pathway is porphyrin-containing compound metabolism; protoporphyrin-IX biosynthesis; coproporphyrinogen-III from 5-aminolevulinate: step 4/4. Catalyzes the decarboxylation of four acetate groups of uroporphyrinogen-III to yield coproporphyrinogen-III. This Brucella ovis (strain ATCC 25840 / 63/290 / NCTC 10512) protein is Uroporphyrinogen decarboxylase.